Consider the following 305-residue polypeptide: uncharacterized protein (305 aa).

This is an uncharacterized protein from Sinorhizobium fredii (strain NBRC 101917 / NGR234).